A 495-amino-acid polypeptide reads, in one-letter code: Ribose import ATP-binding protein RbsA (495 aa).

ABC transporter domains lie at 7-242 and 250-491; these read LEMR…VGRP and ERDI…TGVN. Residue 39 to 46 participates in ATP binding; it reads GENGAGKS.

It belongs to the ABC transporter superfamily. Ribose importer (TC 3.A.1.2.1) family. The complex is composed of an ATP-binding protein (RbsA), two transmembrane proteins (RbsC) and a solute-binding protein (RbsB).

It is found in the cell inner membrane. The enzyme catalyses D-ribose(out) + ATP + H2O = D-ribose(in) + ADP + phosphate + H(+). Part of the ABC transporter complex RbsABC involved in ribose import. Responsible for energy coupling to the transport system. This is Ribose import ATP-binding protein RbsA from Shigella dysenteriae serotype 1 (strain Sd197).